A 436-amino-acid polypeptide reads, in one-letter code: Retinoic acid receptor RXR (436 aa).

The interval 1-108 (MDRSEGMDTL…GPSPSPGLPH (108 aa)) is disordered. Residues 1 to 116 (MDRSEGMDTL…PHSSLHTKHI (116 aa)) are modulating. Low complexity predominate over residues 13-22 (SMPSGMSMGM). Polar residues-rich tracts occupy residues 40–49 (SSLTSPTSTH) and 62–76 (MASSTQPSPGPQQMH). Low complexity predominate over residues 85–98 (SSMGSPPMLCLSPS). NR C4-type zinc fingers lie at residues 117-137 (CAICGDRASGKHYGVYSCEGC) and 153-172 (CRDDKNCMIDKRQRNRCQYC). A DNA-binding region (nuclear receptor) is located at residues 117 to 182 (CAICGDRASG…RYMKCLSMGM (66 aa)). A hinge region spans residues 183–206 (KREAVQEERQRVKEKGDGEVESTS). The span at 189–200 (EERQRVKEKGDG) shows a compositional bias: basic and acidic residues. Residues 189-209 (EERQRVKEKGDGEVESTSGAN) form a disordered region. The NR LBD domain maps to 209–432 (NNDMPVEQIL…TFLMEMLENP (224 aa)). 9-cis-retinoate is bound by residues R290 and A301.

This sequence belongs to the nuclear hormone receptor family. NR2 subfamily. In terms of assembly, homodimer (via ligand-binding domain). Heterodimer. Homotetramer consisting of 2 canonical homodimers. Within the tetramer, each monomer binds one molecule of 9C-RA and a NCOA1-derived peptide containing an L-X(2)-L-L motif.

It is found in the nucleus. In terms of biological role, ligand-dependent transcription factor probably involved in the retinoic acid response pathway. Binds 9-cis-retinoic acid (9C-RA) and, to a lesser extent, docosahexaenoic acid (DHA), phytanic acid, methoprene acid and oleic acid. Binds to double-stranded DNA sequences containing direct repeats (DR) with the consensus sequence 5'-[AG]GGTCA-3' and 1, 2, 3, 4 or 5 nucleotides in between (DR1, DR2, DR3. DR4 and DR5, respectively). Binding to DR1 is strongest. Transactivates gene expression when 9C-RA or DHA is bound. The polypeptide is Retinoic acid receptor RXR (Biomphalaria glabrata (Bloodfluke planorb)).